The following is a 103-amino-acid chain: uncharacterized protein (103 aa).

This is an uncharacterized protein from Pseudescherichia vulneris (Escherichia vulneris).